Reading from the N-terminus, the 206-residue chain is FKBP-type 22 kDa peptidyl-prolyl cis-trans isomerase (206 aa).

A PPIase FKBP-type domain is found at 120–206 (TDRVRVHYTG…VFEVELLEIL (87 aa)).

In terms of assembly, homodimer.

It localises to the cytoplasm. It is found in the periplasm. It carries out the reaction [protein]-peptidylproline (omega=180) = [protein]-peptidylproline (omega=0). Strongly inhibited by FK506. Functionally, PPIases accelerate the folding of proteins. Catalyzes the cis-trans isomerization of proline imidic peptide bonds in oligopeptides. Displays a preference for substrates with a lysyl residue in the P1 position. The sequence is that of FKBP-type 22 kDa peptidyl-prolyl cis-trans isomerase (fklB) from Escherichia coli (strain K12).